Reading from the N-terminus, the 104-residue chain is Large ribosomal subunit protein bL21 (104 aa).

This sequence belongs to the bacterial ribosomal protein bL21 family. In terms of assembly, part of the 50S ribosomal subunit. Contacts protein L20.

This protein binds to 23S rRNA in the presence of protein L20. This is Large ribosomal subunit protein bL21 from Thermotoga petrophila (strain ATCC BAA-488 / DSM 13995 / JCM 10881 / RKU-1).